A 626-amino-acid polypeptide reads, in one-letter code: Kinesin-like protein Klp59C (626 aa).

The interval 1–183 (MDKLSIEQKI…VRSGTTNERI (183 aa)) is globular. The tract at residues 68–155 (CSGGNAASAN…GKNEDPGNPN (88 aa)) is disordered. Residues 72–96 (NAASANQTASISPRSMKQRIATGSL) are compositionally biased toward polar residues. The span at 101–112 (ATAPPRQQTAPP) shows a compositional bias: low complexity. Basic and acidic residues predominate over residues 113–150 (VREDEVVHQAERMRKERERRREAQARTRLDREQGKNED). Residues 115 to 150 (EDEVVHQAERMRKERERRREAQARTRLDREQGKNED) adopt a coiled-coil conformation. One can recognise a Kinesin motor domain in the interval 187-521 (QIMVCVRKRP…LRYADRVKEL (335 aa)). An ATP-binding site is contributed by 277-284 (GQTGSGKT). The disordered stretch occupies residues 557–608 (ASSTSMPGGGNQAQQHTNTANDLNRSQKPTSKPTYPTSGQQLVQRKGSSQRE).

The protein belongs to the TRAFAC class myosin-kinesin ATPase superfamily. Kinesin family. MCAK/KIF2 subfamily.

Its subcellular location is the chromosome. It is found in the centromere. It localises to the kinetochore. The protein resides in the cytoplasm. The protein localises to the cytoskeleton. Its subcellular location is the spindle pole. Functionally, required during anaphase to drive sister chromatid separation to actively depolymerize kinetochore microtubules at their kinetochore-associated plus ends, thereby contributing to chromatid mobility through a 'Pac-man' mechanism. This Drosophila melanogaster (Fruit fly) protein is Kinesin-like protein Klp59C (Klp59C).